Here is a 599-residue protein sequence, read N- to C-terminus: Elongation factor 4 (599 aa).

In terms of domain architecture, tr-type G spans 5-187; it reads AHIRNFSIVA…AIVKHLPAPK (183 aa). Residues 17 to 22 and 134 to 137 each bind GTP; these read DHGKST and NKID.

Belongs to the TRAFAC class translation factor GTPase superfamily. Classic translation factor GTPase family. LepA subfamily.

The protein resides in the cell inner membrane. It catalyses the reaction GTP + H2O = GDP + phosphate + H(+). Required for accurate and efficient protein synthesis under certain stress conditions. May act as a fidelity factor of the translation reaction, by catalyzing a one-codon backward translocation of tRNAs on improperly translocated ribosomes. Back-translocation proceeds from a post-translocation (POST) complex to a pre-translocation (PRE) complex, thus giving elongation factor G a second chance to translocate the tRNAs correctly. Binds to ribosomes in a GTP-dependent manner. In Ruegeria pomeroyi (strain ATCC 700808 / DSM 15171 / DSS-3) (Silicibacter pomeroyi), this protein is Elongation factor 4.